The chain runs to 138 residues: ATP synthase epsilon chain (138 aa).

The protein belongs to the ATPase epsilon chain family. In terms of assembly, F-type ATPases have 2 components, CF(1) - the catalytic core - and CF(0) - the membrane proton channel. CF(1) has five subunits: alpha(3), beta(3), gamma(1), delta(1), epsilon(1). CF(0) has three main subunits: a, b and c.

Its subcellular location is the cell membrane. Functionally, produces ATP from ADP in the presence of a proton gradient across the membrane. This Streptococcus gordonii (strain Challis / ATCC 35105 / BCRC 15272 / CH1 / DL1 / V288) protein is ATP synthase epsilon chain.